The following is a 656-amino-acid chain: CoB--CoM heterodisulfide reductase iron-sulfur subunit A 2 (656 aa).

Position 152 to 175 (152 to 175 (GGGVSGIQAALDLADMGFEVILVE)) interacts with FAD. 4Fe-4S ferredoxin-type domains lie at 238 to 269 (KKPRYVDEDACTGCGACAEVCPIEVPNEFDEG), 286 to 315 (SVFTIDEEHCIRCGLCEEVCDADAIDFDQE), 577 to 606 (IVSEVDEEICGGCGTCVELCPYGAIELVEK), and 610 to 639 (LVAEVTAALCKGCGTCAAACPSGAMEQNHF). [4Fe-4S] cluster-binding residues include Cys248, Cys251, Cys254, Cys258, Cys295, Cys298, Cys301, Cys305, Cys586, Cys589, Cys592, Cys596, Cys619, Cys622, Cys625, and Cys629.

This sequence belongs to the HdrA family. In terms of assembly, the ferredoxin:CoB-CoM heterodisulfide reductase is composed of three subunits; HdrA, HdrB and HdrC. [4Fe-4S] cluster is required as a cofactor. The cofactor is FAD.

It participates in cofactor metabolism; coenzyme M-coenzyme B heterodisulfide reduction; coenzyme B and coenzyme M from coenzyme M-coenzyme B heterodisulfide: step 1/1. In terms of biological role, part of a complex that catalyzes the reversible reduction of CoM-S-S-CoB to the thiol-coenzymes H-S-CoM (coenzyme M) and H-S-CoB (coenzyme B). The protein is CoB--CoM heterodisulfide reductase iron-sulfur subunit A 2 (hdrA2) of Methanopyrus kandleri (strain AV19 / DSM 6324 / JCM 9639 / NBRC 100938).